The chain runs to 187 residues: MKGLYQAAGRTLVTLGGLSIFSGAIAFFPVFSCKLWYTGWSVWIACPIWNGALAVTAGSLVLLAHREWTQRHLWEAVFTFVILSILGCPLHFTVALQSALLGPYCFYSFSGVAGTNYLGYVVTFPFPYTKFPSVCVDPLHYEEYHLTLQVLDLCLSLILFCVSLAVFIKLSARLMQTGYINGPENPQ.

A run of 5 helical transmembrane segments spans residues 11 to 31 (TLVT…FPVF), 42 to 62 (VWIA…SLVL), 76 to 96 (AVFT…TVAL), 106 to 126 (FYSF…TFPF), and 148 to 168 (LQVL…AVFI).

It localises to the membrane. The sequence is that of Transmembrane protein 212 (Tmem212) from Mus musculus (Mouse).